The chain runs to 613 residues: Pesticidal crystal-like protein Cry16Aa (613 aa).

This sequence belongs to the delta endotoxin family.

Its subcellular location is the secreted. Toxin active on mosquito larvae of the species Aedes aegypti, Culex pipiens and Anopheles stephensi. This chain is Pesticidal crystal-like protein Cry16Aa (cry16Aa), found in Paraclostridium bifermentans (Clostridium bifermentans).